A 543-amino-acid polypeptide reads, in one-letter code: T-complex protein 1 subunit eta (543 aa).

Position 1 is an N-acetylmethionine (M1). G41 serves as a coordination point for ADP. G41 contacts ATP. K67 bears the N6-acetyllysine mark. D92 serves as a coordination point for Mg(2+). Residues G93, T94, T95, S96, S164, and S165 each coordinate ADP. G93 serves as a coordination point for ATP. S96 lines the ATP pocket. K250 and K320 each carry N6-acetyllysine. The ATP site is built by R398 and G409. ADP is bound at residue G409. K430 is covalently cross-linked (Glycyl lysine isopeptide (Lys-Gly) (interchain with G-Cter in SUMO2)). ADP is bound by residues E494 and R499. R499 provides a ligand contact to ATP. A disordered region spans residues 524–543 (RSTVDASPAAGRGRGRGRLH). The residue at position 535 (R535) is an Omega-N-methylarginine.

Belongs to the TCP-1 chaperonin family. As to quaternary structure, component of the chaperonin-containing T-complex (TRiC), a hexadecamer composed of two identical back-to-back stacked rings enclosing a protein folding chamber. Each ring is made up of eight different subunits: TCP1/CCT1, CCT2, CCT3, CCT4, CCT5, CCT6A/CCT6, CCT7, CCT8. Interacts with PACRG. Interacts with DLEC1.

The protein localises to the cytoplasm. The enzyme catalyses ATP + H2O = ADP + phosphate + H(+). In terms of biological role, component of the chaperonin-containing T-complex (TRiC), a molecular chaperone complex that assists the folding of actin, tubulin and other proteins upon ATP hydrolysis. The TRiC complex mediates the folding of WRAP53/TCAB1, thereby regulating telomere maintenance. This is T-complex protein 1 subunit eta (CCT7) from Bos taurus (Bovine).